The chain runs to 164 residues: 2S seed storage protein 3 (164 aa).

The signal sequence occupies residues 1-21 (MANKLFLVCATLALCFLLTNA). 2 consecutive propeptides follow at residues 22–37 (SIYR…DASN) and 73–81 (GPSLDDEFD).

Belongs to the 2S seed storage albumins family. The mature protein consists of a small and a large chain linked by disulfide bonds. Interacts with AHK2.

Its function is as follows. This is a 2S seed storage protein. The protein is 2S seed storage protein 3 (AT2S3) of Arabidopsis thaliana (Mouse-ear cress).